The chain runs to 257 residues: Receptor expression-enhancing protein 4 (257 aa).

2 helical membrane passes run 1–21 and 42–62; these read MVSW…CPAY and WIVF…ISWF. Serine 152 and serine 194 each carry phosphoserine. The disordered stretch occupies residues 183 to 257; that stretch reads PIGYRAGGLQ…KKTVPSDVDS (75 aa). Threonine 196 is modified (phosphothreonine). Serine 202 carries the phosphoserine modification. Threonine 250 carries the phosphothreonine modification. A Phosphoserine modification is found at serine 253.

Belongs to the DP1 family. Expressed in circumvallate papillae and testis.

It is found in the endoplasmic reticulum membrane. In terms of biological role, microtubule-binding protein required to ensure proper cell division and nuclear envelope reassembly by sequestering the endoplasmic reticulum away from chromosomes during mitosis. Probably acts by clearing the endoplasmic reticulum membrane from metaphase chromosomes. This Homo sapiens (Human) protein is Receptor expression-enhancing protein 4 (REEP4).